The chain runs to 244 residues: 1-(5-phosphoribosyl)-5-[(5-phosphoribosylamino)methylideneamino] imidazole-4-carboxamide isomerase (244 aa).

Residue Asp10 is the Proton acceptor of the active site. Asp132 (proton donor) is an active-site residue.

It belongs to the HisA/HisF family.

The protein resides in the cytoplasm. The enzyme catalyses 1-(5-phospho-beta-D-ribosyl)-5-[(5-phospho-beta-D-ribosylamino)methylideneamino]imidazole-4-carboxamide = 5-[(5-phospho-1-deoxy-D-ribulos-1-ylimino)methylamino]-1-(5-phospho-beta-D-ribosyl)imidazole-4-carboxamide. It functions in the pathway amino-acid biosynthesis; L-histidine biosynthesis; L-histidine from 5-phospho-alpha-D-ribose 1-diphosphate: step 4/9. The chain is 1-(5-phosphoribosyl)-5-[(5-phosphoribosylamino)methylideneamino] imidazole-4-carboxamide isomerase from Xanthomonas oryzae pv. oryzae (strain MAFF 311018).